Consider the following 208-residue polypeptide: FMN-dependent NADH:quinone oxidoreductase (208 aa).

Residues Ser-10, 16–18, 94–97, and 138–141 each bind FMN; these read SVS, MYNF, and SRGG.

This sequence belongs to the azoreductase type 1 family. Homodimer. FMN serves as cofactor.

It catalyses the reaction 2 a quinone + NADH + H(+) = 2 a 1,4-benzosemiquinone + NAD(+). It carries out the reaction N,N-dimethyl-1,4-phenylenediamine + anthranilate + 2 NAD(+) = 2-(4-dimethylaminophenyl)diazenylbenzoate + 2 NADH + 2 H(+). Quinone reductase that provides resistance to thiol-specific stress caused by electrophilic quinones. In terms of biological role, also exhibits azoreductase activity. Catalyzes the reductive cleavage of the azo bond in aromatic azo compounds to the corresponding amines. The protein is FMN-dependent NADH:quinone oxidoreductase of Hyphomonas neptunium (strain ATCC 15444).